A 233-amino-acid chain; its full sequence is Biosynthetic peptidoglycan transglycosylase (233 aa).

Residues 8-28 (LIALPVGIFIFFNAYVYGNII) traverse the membrane as a helical segment.

The protein belongs to the glycosyltransferase 51 family.

It localises to the cell inner membrane. It catalyses the reaction [GlcNAc-(1-&gt;4)-Mur2Ac(oyl-L-Ala-gamma-D-Glu-L-Lys-D-Ala-D-Ala)](n)-di-trans,octa-cis-undecaprenyl diphosphate + beta-D-GlcNAc-(1-&gt;4)-Mur2Ac(oyl-L-Ala-gamma-D-Glu-L-Lys-D-Ala-D-Ala)-di-trans,octa-cis-undecaprenyl diphosphate = [GlcNAc-(1-&gt;4)-Mur2Ac(oyl-L-Ala-gamma-D-Glu-L-Lys-D-Ala-D-Ala)](n+1)-di-trans,octa-cis-undecaprenyl diphosphate + di-trans,octa-cis-undecaprenyl diphosphate + H(+). Its pathway is cell wall biogenesis; peptidoglycan biosynthesis. In terms of biological role, peptidoglycan polymerase that catalyzes glycan chain elongation from lipid-linked precursors. In Neisseria meningitidis serogroup C / serotype 2a (strain ATCC 700532 / DSM 15464 / FAM18), this protein is Biosynthetic peptidoglycan transglycosylase.